The sequence spans 486 residues: Transcription factor aptf-4 (486 aa).

Disordered regions lie at residues C25 to M49 and L150 to K173. The segment covering L150–C169 has biased composition (polar residues). Positions Q301–E430 are H-S-H (helix-span-helix), dimerization.

This sequence belongs to the AP-2 family. In terms of assembly, binds DNA as a dimer.

It localises to the nucleus. Sequence-specific DNA-binding protein that interacts with enhancer elements to regulate transcription of selected genes. Required for neuroblast and epidermal morphogenesis, perhaps acting in cooperation with transcription factor aptf-2. This chain is Transcription factor aptf-4, found in Caenorhabditis elegans.